A 177-amino-acid polypeptide reads, in one-letter code: R-phycoerythrin beta chain (177 aa).

Residues Cys50 and Cys61 each coordinate phycourobilin. Asn72 carries the post-translational modification N4-methylasparagine. 2 residues coordinate (2R,3E)-phycoerythrobilin: Cys82 and Cys158.

This sequence belongs to the phycobiliprotein family. Heterodimer of an alpha and a beta chain. Post-translationally, contains two covalently linked phycoerythrobilin chromophores and one covalently linked phycourobilin chromophore.

It localises to the plastid. The protein localises to the chloroplast thylakoid membrane. Functionally, light-harvesting photosynthetic bile pigment-protein from the phycobiliprotein complex. The sequence is that of R-phycoerythrin beta chain (cpeB) from Porphyra purpurea (Red seaweed).